Consider the following 229-residue polypeptide: tRNA (guanine-N(1)-)-methyltransferase (229 aa).

S-adenosyl-L-methionine is bound by residues G109 and 129–134 (IGDFIL).

The protein belongs to the RNA methyltransferase TrmD family. As to quaternary structure, homodimer.

The protein localises to the cytoplasm. It catalyses the reaction guanosine(37) in tRNA + S-adenosyl-L-methionine = N(1)-methylguanosine(37) in tRNA + S-adenosyl-L-homocysteine + H(+). In terms of biological role, specifically methylates guanosine-37 in various tRNAs. The protein is tRNA (guanine-N(1)-)-methyltransferase of Helicobacter pylori (strain Shi470).